The primary structure comprises 472 residues: Adenosylhomocysteinase (472 aa).

3 residues coordinate substrate: Thr64, Asp138, and Glu198. 199-201 (TTT) is a binding site for NAD(+). Substrate contacts are provided by Lys228 and Asp232. NAD(+) contacts are provided by residues Asn233, 262–267 (GFGDVG), Glu285, Asn320, 341–343 (IGH), and Asn386.

It belongs to the adenosylhomocysteinase family. The cofactor is NAD(+).

The protein localises to the cytoplasm. The catalysed reaction is S-adenosyl-L-homocysteine + H2O = L-homocysteine + adenosine. Its pathway is amino-acid biosynthesis; L-homocysteine biosynthesis; L-homocysteine from S-adenosyl-L-homocysteine: step 1/1. Functionally, may play a key role in the regulation of the intracellular concentration of adenosylhomocysteine. This Prochlorococcus marinus subsp. pastoris (strain CCMP1986 / NIES-2087 / MED4) protein is Adenosylhomocysteinase.